A 458-amino-acid chain; its full sequence is Argininosuccinate lyase (458 aa).

It belongs to the lyase 1 family. Argininosuccinate lyase subfamily.

The protein localises to the cytoplasm. It catalyses the reaction 2-(N(omega)-L-arginino)succinate = fumarate + L-arginine. It participates in amino-acid biosynthesis; L-arginine biosynthesis; L-arginine from L-ornithine and carbamoyl phosphate: step 3/3. The sequence is that of Argininosuccinate lyase from Bacillus velezensis (strain DSM 23117 / BGSC 10A6 / LMG 26770 / FZB42) (Bacillus amyloliquefaciens subsp. plantarum).